Consider the following 421-residue polypeptide: 4-aminobutyrate aminotransferase PuuE (421 aa).

Pyridoxal 5'-phosphate contacts are provided by residues 110–111 (GA) and 238–241 (DEVQ). Lysine 267 carries the N6-(pyridoxal phosphate)lysine modification. Threonine 296 is a pyridoxal 5'-phosphate binding site.

It belongs to the class-III pyridoxal-phosphate-dependent aminotransferase family. It depends on pyridoxal 5'-phosphate as a cofactor.

It carries out the reaction 4-aminobutanoate + 2-oxoglutarate = succinate semialdehyde + L-glutamate. It participates in amine and polyamine degradation; putrescine degradation; succinate semialdehyde from 4-aminobutanoate. Completely inhibited by succinate and low-aeration conditions. Its function is as follows. Catalyzes the transfer of the amino group from gamma-aminobutyrate (GABA) to alpha-ketoglutarate (KG) to yield succinic semialdehyde (SSA). PuuE is important for utilization of putrescine as the sole nitrogen or carbon source. In Escherichia coli (strain K12), this protein is 4-aminobutyrate aminotransferase PuuE (puuE).